We begin with the raw amino-acid sequence, 393 residues long: Acetyl-CoA acetyltransferase (393 aa).

C88 serves as the catalytic Acyl-thioester intermediate. Active-site proton acceptor residues include H349 and C379.

This sequence belongs to the thiolase-like superfamily. Thiolase family. In terms of assembly, homotetramer.

It is found in the cytoplasm. It carries out the reaction 2 acetyl-CoA = acetoacetyl-CoA + CoA. It functions in the pathway biopolymer metabolism; poly-(R)-3-hydroxybutanoate biosynthesis. Its activity is regulated as follows. The condensation reaction is inhibited by free CoA. The cleavage reaction is characterized by substrate inhibition by acetoacetyl-CoA, which is partially relieved by free CoA. Functionally, catalyzes the condensation of two acetyl-coA units to form acetoacetyl-CoA. Is involved in the biosynthesis of polyhydroxybutyrate (PHB), which is accumulated as an intracellular energy reserve material when cells grow under conditions of nutrient limitation. Also catalyzes the reverse reaction, i.e. the cleavage of acetoacetyl-CoA, and is therefore also involved in the reutilization of PHB. This is Acetyl-CoA acetyltransferase from Cupriavidus necator (strain ATCC 17699 / DSM 428 / KCTC 22496 / NCIMB 10442 / H16 / Stanier 337) (Ralstonia eutropha).